The chain runs to 306 residues: tRNA pseudouridine synthase B (306 aa).

The active-site Nucleophile is Asp-48.

This sequence belongs to the pseudouridine synthase TruB family. Type 1 subfamily.

The enzyme catalyses uridine(55) in tRNA = pseudouridine(55) in tRNA. Responsible for synthesis of pseudouridine from uracil-55 in the psi GC loop of transfer RNAs. The sequence is that of tRNA pseudouridine synthase B from Ectopseudomonas mendocina (strain ymp) (Pseudomonas mendocina).